A 339-amino-acid chain; its full sequence is Replication factor C subunit 4 (339 aa).

Residue 49 to 56 (GPPGTGKT) coordinates ATP.

This sequence belongs to the activator 1 small subunits family. As to quaternary structure, heterotetramer of subunits RFC2, RFC3, RFC4 and RFC5 that can form a complex with RFC1.

The protein localises to the nucleus. Functionally, may be involved in DNA replication and thus regulate cell proliferation. The sequence is that of Replication factor C subunit 4 (RFC4) from Arabidopsis thaliana (Mouse-ear cress).